The sequence spans 161 residues: MDQEAVGNVVLLAIVTLISVVQNAFFAHKVELESKAQSGRSFQRTGTLAFERVYTANQNCVDAYPTFLVVLWTAGLLCSQVPAAFAGLMYLFVRQKYFVGYLGERTQSTPGYIFGKRIILFLFLMSLAGILNHYLIFFFGSDFENYIRTITTTISPLLLIP.

Residues 1 to 8 (MDQEAVGN) lie on the Lumenal side of the membrane. The helical transmembrane segment at 9 to 30 (VVLLAIVTLISVVQNAFFAHKV) threads the bilayer. The Cytoplasmic segment spans residues 31–52 (ELESKAQSGRSFQRTGTLAFER). The helical transmembrane segment at 53-77 (VYTANQNCVDAYPTFLVVLWTAGLL) threads the bilayer. Over 78-80 (CSQ) the chain is Lumenal. Residues 81–102 (VPAAFAGLMYLFVRQKYFVGYL) form a helical membrane-spanning segment. Residues 103–107 (GERTQ) are Cytoplasmic-facing. The stretch at 108-115 (STPGYIFG) is an intramembrane region. Residues 116 to 128 (KRIILFLFLMSLA) form a helical membrane-spanning segment. Over 129–161 (GILNHYLIFFFGSDFENYIRTITTTISPLLLIP) the chain is Lumenal.

It belongs to the MAPEG family. In terms of assembly, homotrimer. Interacts with LTC4S and ALOX5.

It localises to the nucleus membrane. Its subcellular location is the endoplasmic reticulum membrane. Its function is as follows. Required for leukotriene biosynthesis by ALOX5 (5-lipoxygenase). Anchors ALOX5 to the membrane. Binds arachidonic acid, and could play an essential role in the transfer of arachidonic acid to ALOX5. Binds to MK-886, a compound that blocks the biosynthesis of leukotrienes. This Rattus norvegicus (Rat) protein is Arachidonate 5-lipoxygenase-activating protein (Alox5ap).